The sequence spans 472 residues: Chromosomal replication initiator protein DnaA (472 aa).

The interval 1 to 73 is domain I, interacts with DnaA modulators; that stretch reads MSNMEQDRWS…LSCWQAELPE (73 aa). The interval 73–128 is domain II; it reads EVNRVDLTVRSPVRCATPAKEVPAPVESRRDEQRPSAERSNGATPVSANHDALGGS. The disordered stretch occupies residues 90 to 124; the sequence is PAKEVPAPVESRRDEQRPSAERSNGATPVSANHDA. Over residues 99-109 the composition is skewed to basic and acidic residues; it reads ESRRDEQRPSA. The span at 110–119 shows a compositional bias: polar residues; sequence ERSNGATPVS. The domain III, AAA+ region stretch occupies residues 129–351; the sequence is PLDPRLTFAS…GAINRLLAHS (223 aa). ATP is bound by residues glycine 176, glycine 178, lysine 179, and threonine 180. The segment at 352 to 472 is domain IV, binds dsDNA; sequence KLNNQPVTLE…VESLKRQLQE (121 aa).

It belongs to the DnaA family. In terms of assembly, oligomerizes as a right-handed, spiral filament on DNA at oriC.

Its subcellular location is the cytoplasm. Plays an essential role in the initiation and regulation of chromosomal replication. ATP-DnaA binds to the origin of replication (oriC) to initiate formation of the DNA replication initiation complex once per cell cycle. Binds the DnaA box (a 9 base pair repeat at the origin) and separates the double-stranded (ds)DNA. Forms a right-handed helical filament on oriC DNA; dsDNA binds to the exterior of the filament while single-stranded (ss)DNA is stabiized in the filament's interior. The ATP-DnaA-oriC complex binds and stabilizes one strand of the AT-rich DNA unwinding element (DUE), permitting loading of DNA polymerase. After initiation quickly degrades to an ADP-DnaA complex that is not apt for DNA replication. Binds acidic phospholipids. This Rhodopseudomonas palustris (strain ATCC BAA-98 / CGA009) protein is Chromosomal replication initiator protein DnaA.